The primary structure comprises 289 residues: Acetyl-coenzyme A carboxylase carboxyl transferase subunit beta (289 aa).

Residues 28-289 (VMTKCPKCKK…QGGEMAVWQS (262 aa)) form the CoA carboxyltransferase N-terminal domain. The Zn(2+) site is built by C32, C35, C51, and C54. Residues 32–54 (CPKCKKIMYTKELLKNLKVCVNC) form a C4-type zinc finger.

Belongs to the AccD/PCCB family. In terms of assembly, acetyl-CoA carboxylase is a heterohexamer composed of biotin carboxyl carrier protein (AccB), biotin carboxylase (AccC) and two subunits each of ACCase subunit alpha (AccA) and ACCase subunit beta (AccD). It depends on Zn(2+) as a cofactor.

The protein localises to the cytoplasm. The catalysed reaction is N(6)-carboxybiotinyl-L-lysyl-[protein] + acetyl-CoA = N(6)-biotinyl-L-lysyl-[protein] + malonyl-CoA. The protein operates within lipid metabolism; malonyl-CoA biosynthesis; malonyl-CoA from acetyl-CoA: step 1/1. Functionally, component of the acetyl coenzyme A carboxylase (ACC) complex. Biotin carboxylase (BC) catalyzes the carboxylation of biotin on its carrier protein (BCCP) and then the CO(2) group is transferred by the transcarboxylase to acetyl-CoA to form malonyl-CoA. This Bacillus cereus (strain AH187) protein is Acetyl-coenzyme A carboxylase carboxyl transferase subunit beta.